The following is a 270-amino-acid chain: Putative pyruvate, phosphate dikinase regulatory protein (270 aa).

151-158 (GVSRTSKT) is an ADP binding site.

This sequence belongs to the pyruvate, phosphate/water dikinase regulatory protein family. PDRP subfamily.

The enzyme catalyses N(tele)-phospho-L-histidyl/L-threonyl-[pyruvate, phosphate dikinase] + ADP = N(tele)-phospho-L-histidyl/O-phospho-L-threonyl-[pyruvate, phosphate dikinase] + AMP + H(+). It catalyses the reaction N(tele)-phospho-L-histidyl/O-phospho-L-threonyl-[pyruvate, phosphate dikinase] + phosphate + H(+) = N(tele)-phospho-L-histidyl/L-threonyl-[pyruvate, phosphate dikinase] + diphosphate. Its function is as follows. Bifunctional serine/threonine kinase and phosphorylase involved in the regulation of the pyruvate, phosphate dikinase (PPDK) by catalyzing its phosphorylation/dephosphorylation. The sequence is that of Putative pyruvate, phosphate dikinase regulatory protein from Streptococcus gordonii (strain Challis / ATCC 35105 / BCRC 15272 / CH1 / DL1 / V288).